The primary structure comprises 662 residues: Hypoxia-inducible factor 3-alpha (662 aa).

Residues 1–25 are disordered; it reads MDWDQDRSNTELRKEKSRDAARSRR. The 54-residue stretch at 12-65 folds into the bHLH domain; the sequence is LRKEKSRDAARSRRSQETEVLYQLAHTLPFARGVSAHLDKASIMRLTISYLRMH. The tract at residues 75–98 is nuclear localization signal (isoform 2); that stretch reads QVEKGGEPLDACYLKALEGFVMVL. 2 consecutive PAS domains span residues 80 to 150 and 225 to 295; these read GEPL…PNLS and PHPA…LSKG. Residues 228-272 are nuclear export signal (isoform 2); that stretch reads ASLEPPLGRGAFLSRHSLDMKFTYCDERIAEVAGYSPDDLIGCSA. 2 disordered regions span residues 352–377 and 416–446; these read EQTE…GNSV and PILD…DLPD. The short motif at 414–418 is the LRRLL element; it reads MAPIL. Low complexity predominate over residues 426–437; that stretch reads TPSTPQATRRPQ. The segment at 448–581 is ODD; the sequence is LTVGLENAHR…SEDKGLELLE (134 aa). The interval 450–501 is NTAD; the sequence is VGLENAHRLSTAQKNKTVETDLDIAQDPDTLDLEMLAPYISMDDDFQLNSSE. Lysine 463 participates in a covalent cross-link: Glycyl lysine isopeptide (Lys-Gly) (interchain with G-Cter in ubiquitin). Residues 485–492 carry the LAPYISMD motif; the sequence is LAPYISMD. 4-hydroxyproline is present on proline 487. The interval 500 to 595 is disordered; that stretch reads SEQLPKVHRR…KRSPRLEPGS (96 aa). The span at 505 to 521 shows a compositional bias: basic residues; it reads KVHRRPPRVARRPRARS. Lysine 565 is covalently cross-linked (Glycyl lysine isopeptide (Lys-Gly) (interchain with G-Cter in ubiquitin)). The segment covering 572–584 has biased composition (basic and acidic residues); it reads SEDKGLELLETKP.

As to quaternary structure, isoform 1 interacts with ARNT. Isoform 2 interacts with HIF1A. Isoform 2 interacts EPAS1. Isoform 2 interacts (via C-terminus domain) with BAD; the interaction reduces the binding between BAD and BAX. Isoform 2 (via C-terminus domain) interacts with BCL2L2 and MCL1. Interacts with VHL. Post-translationally, in normoxia, hydroxylated on Pro-487 in the oxygen-dependent degradation domain (ODD) by PHD. The hydroxylated proline promotes interaction with VHL, initiating rapid ubiquitination and subsequent proteasomal degradation. In terms of processing, ubiquitinated; ubiquitination occurs in a VHL- and oxygen-dependent pathway and subsequently targeted for proteasomal degradation. In terms of tissue distribution, isoform 3 is expressed in endothelial cells of vessels and capillaries in alveoli of the neonatal lung (at protein level). Expressed in lung, brain, heart and kidney. Isoform 2 is expressed in heart and lung. Isoform 2 is highly expressed in the epithelial cell layer of the cornea with lower expression in the layers of ganglion cells, inner nuclear cells, and rods and cones of the retina. Isoform 2 is expressed in the cerebellum only in the Purkinje cell layer.

The protein localises to the nucleus. It is found in the cytoplasm. Its subcellular location is the nucleus speckle. The protein resides in the mitochondrion. Acts as a transcriptional regulator in adaptive response to low oxygen tension. Acts as a regulator of hypoxia-inducible gene expression. Plays a role in the development of the cardiorespiratory system. Functionally, acts as a positive regulator of hypoxia-inducible gene expression. Associates to core DNA sequence 5'-TACGTG-3' within the hypoxia response element (HRE) of target gene promoters in a ARNT-dependent manner, and hence also participates in the transcriptional activation of reporter genes driven by HRE. In terms of biological role, attenuates the ability of transcription factor HIF1A, EPAS1 and the HIF1A-ARNT complex to bind to hypoxia-responsive elements (HRE) located within the enhancer/promoter of hypoxia-inducible target genes and hence inhibits HRE-driven transcriptional activation. Functions as an inhibitor of angiogenesis in hypoxic cells of the cornea. May act as a tumor suppressor. May also be involved in apoptosis. Its function is as follows. Attenuates the ability of transcription factor HIF1A, EPAS1 and the HIF1A-ARNT complex to bind to hypoxia-responsive elements (HRE) located within the enhancer/promoter of hypoxia-inducible target genes and hence inhibits HRE-driven transcriptional activation. Also plays a role in the development of the lung and heart during embryonic and neonatal stages. In Mus musculus (Mouse), this protein is Hypoxia-inducible factor 3-alpha.